A 912-amino-acid polypeptide reads, in one-letter code: Receptor protein kinase WSS1 (912 aa).

The first 27 residues, 1 to 27 (MGRDARRLPLLPFLLLLLAAAAGVAES), serve as a signal peptide directing secretion. Topologically, residues 28–477 (ATDAEAIHDL…AGGGKSKPNT (450 aa)) are extracellular. LRR repeat units follow at residues 64–88 (AGKVTELNLADRGLSGTLPDSLSSL), 89–111 (TSLTALQLQGNALTGAVPSLARM), and 112–134 (GSLARLALDGNAFTSLPPDFLHG). Residues Asn-159, Asn-170, Asn-196, Asn-256, Asn-286, Asn-371, Asn-376, Asn-387, and Asn-400 are each glycosylated (N-linked (GlcNAc...) asparagine). LRR repeat units follow at residues 184 to 208 (LVSLRNLRLSYNNLTGGLPPELSSL), 235 to 261 (MKSLKLLWIQSNKFTGPIPDLNGTQLE), 281 to 303 (LMSLKNVSLSNNNFQGPKPAFAA), 364 to 388 (SSDVSMINLSRKNLSGRISPALANL), 389 to 411 (TRLARLDLSNNNLTGVIPDVLTT), and 413 to 438 (PSLTVLNVANNRLTGEVPKFKPSVNV). The segment at 448–472 (SSGSSGGGGGSDGDSSSSDSAGGGK) is disordered. Residues 478 to 498 (GMIIGIIVAVIILFACIALLV) form a helical membrane-spanning segment. The Cytoplasmic portion of the chain corresponds to 499-912 (HHRKKKNVEK…SFNVPRKYNG (414 aa)). A Protein kinase domain is found at 580 to 859 (FSEDCILGRG…HCVNRLSSLV (280 aa)). Residues 586–594 (LGRGGFGVV) and Lys-607 each bind ATP. The active-site Proton acceptor is the Asp-708.

The protein belongs to the protein kinase superfamily. Ser/Thr protein kinase family. Mn(2+) is required as a cofactor. In terms of tissue distribution, expressed in young and mature leaves.

The protein resides in the cell membrane. It catalyses the reaction L-seryl-[protein] + ATP = O-phospho-L-seryl-[protein] + ADP + H(+). It carries out the reaction L-threonyl-[protein] + ATP = O-phospho-L-threonyl-[protein] + ADP + H(+). Its function is as follows. Transmembrane kinase receptor involved in the regulation of reactive oxygen species (ROS) homeostasis, chloroplast development and leaf senescence. The protein is Receptor protein kinase WSS1 of Oryza sativa subsp. japonica (Rice).